A 304-amino-acid polypeptide reads, in one-letter code: Protein Largen (304 aa).

Over residues 1 to 22 (MSAKSKGNPSSSSAAEGPPAAS) the composition is skewed to low complexity. Disordered regions lie at residues 1 to 27 (MSAK…TKVK), 66 to 109 (QLED…PPAH), 114 to 133 (LTVL…TPVR), and 236 to 304 (EPVH…TTTV). Positions 33 to 70 (IVEDLELVLGDLKDVAKELKEVVDQIDTLTSDLQLEDE) form a coiled coil. Positions 77–91 (TDTLNSSSSGTTASS) are enriched in low complexity. Composition is skewed to pro residues over residues 120–129 (PNPPPPPPRL) and 275–289 (FPPP…PAAP).

Its function is as follows. Regulator of cell size that promotes cell size increase independently of mTOR and Hippo signaling pathways. Acts by stimulating the translation of specific mRNAs, including those encoding proteins affecting mitochondrial functions. Increases mitochondrial mass and respiration. This is Protein Largen (Prr16) from Mus musculus (Mouse).